The following is a 177-amino-acid chain: Large ribosomal subunit protein uL6 (177 aa).

The protein belongs to the universal ribosomal protein uL6 family. As to quaternary structure, part of the 50S ribosomal subunit.

Functionally, this protein binds to the 23S rRNA, and is important in its secondary structure. It is located near the subunit interface in the base of the L7/L12 stalk, and near the tRNA binding site of the peptidyltransferase center. In Sphingopyxis alaskensis (strain DSM 13593 / LMG 18877 / RB2256) (Sphingomonas alaskensis), this protein is Large ribosomal subunit protein uL6.